Consider the following 40-residue polypeptide: Photosystem II reaction center protein J (40 aa).

A helical transmembrane segment spans residues 8-28 (IPLWLIGTVTGIPVIGSIGIF).

This sequence belongs to the PsbJ family. PSII is composed of 1 copy each of membrane proteins PsbA, PsbB, PsbC, PsbD, PsbE, PsbF, PsbH, PsbI, PsbJ, PsbK, PsbL, PsbM, PsbT, PsbX, PsbY, PsbZ, Psb30/Ycf12, at least 3 peripheral proteins of the oxygen-evolving complex and a large number of cofactors. It forms dimeric complexes.

Its subcellular location is the plastid. The protein localises to the chloroplast thylakoid membrane. Its function is as follows. One of the components of the core complex of photosystem II (PSII). PSII is a light-driven water:plastoquinone oxidoreductase that uses light energy to abstract electrons from H(2)O, generating O(2) and a proton gradient subsequently used for ATP formation. It consists of a core antenna complex that captures photons, and an electron transfer chain that converts photonic excitation into a charge separation. This is Photosystem II reaction center protein J from Chloranthus spicatus (Chulantree).